Reading from the N-terminus, the 359-residue chain is 3-dehydroquinate synthase (359 aa).

NAD(+)-binding positions include 71–76 (DGEQYK), 105–109 (GVIGD), 129–130 (TT), lysine 142, lysine 151, and 169–172 (CLKT). 3 residues coordinate Zn(2+): glutamate 184, histidine 247, and histidine 264.

The protein belongs to the sugar phosphate cyclases superfamily. Dehydroquinate synthase family. Requires Co(2+) as cofactor. It depends on Zn(2+) as a cofactor. NAD(+) serves as cofactor.

The protein localises to the cytoplasm. It catalyses the reaction 7-phospho-2-dehydro-3-deoxy-D-arabino-heptonate = 3-dehydroquinate + phosphate. It participates in metabolic intermediate biosynthesis; chorismate biosynthesis; chorismate from D-erythrose 4-phosphate and phosphoenolpyruvate: step 2/7. Its function is as follows. Catalyzes the conversion of 3-deoxy-D-arabino-heptulosonate 7-phosphate (DAHP) to dehydroquinate (DHQ). This Shewanella amazonensis (strain ATCC BAA-1098 / SB2B) protein is 3-dehydroquinate synthase.